A 235-amino-acid polypeptide reads, in one-letter code: Probable transcriptional regulatory protein CFF8240_0424 (235 aa).

The protein belongs to the TACO1 family.

It is found in the cytoplasm. The chain is Probable transcriptional regulatory protein CFF8240_0424 from Campylobacter fetus subsp. fetus (strain 82-40).